Consider the following 335-residue polypeptide: Nuclear envelope-associated protein 2 (335 aa).

Coiled coils occupy residues 55 to 85 (RKEAEKKAKNMEMEICKLQKKLEDRNCELVA) and 125 to 260 (CSVL…LKKK). Residues 239 to 260 (KTKELESQLERQRRADQELKKK) carry the Bipartite nuclear localization signal motif. Residues 312-329 (FWDTSGFKIVVSMSMLIL) form a helical membrane-spanning segment.

Forms homomers and heteromers with NEAP1 and NEAP3. Interacts with SUN1 and SUN2.

It is found in the nucleus inner membrane. Its subcellular location is the nucleus. The protein resides in the nucleoplasm. The polypeptide is Nuclear envelope-associated protein 2 (Arabidopsis thaliana (Mouse-ear cress)).